Reading from the N-terminus, the 289-residue chain is Acetyl-coenzyme A carboxylase carboxyl transferase subunit beta (289 aa).

The region spanning 28–289 (VMTKCPKCKK…QGEGMAVWQN (262 aa)) is the CoA carboxyltransferase N-terminal domain. Residues cysteine 32, cysteine 35, cysteine 51, and cysteine 54 each contribute to the Zn(2+) site. The segment at 32-54 (CPKCKKIMYTKELLKNLKVCVNC) adopts a C4-type zinc-finger fold.

Belongs to the AccD/PCCB family. As to quaternary structure, acetyl-CoA carboxylase is a heterohexamer composed of biotin carboxyl carrier protein (AccB), biotin carboxylase (AccC) and two subunits each of ACCase subunit alpha (AccA) and ACCase subunit beta (AccD). The cofactor is Zn(2+).

The protein resides in the cytoplasm. The catalysed reaction is N(6)-carboxybiotinyl-L-lysyl-[protein] + acetyl-CoA = N(6)-biotinyl-L-lysyl-[protein] + malonyl-CoA. It participates in lipid metabolism; malonyl-CoA biosynthesis; malonyl-CoA from acetyl-CoA: step 1/1. Its function is as follows. Component of the acetyl coenzyme A carboxylase (ACC) complex. Biotin carboxylase (BC) catalyzes the carboxylation of biotin on its carrier protein (BCCP) and then the CO(2) group is transferred by the transcarboxylase to acetyl-CoA to form malonyl-CoA. This is Acetyl-coenzyme A carboxylase carboxyl transferase subunit beta from Bacillus cytotoxicus (strain DSM 22905 / CIP 110041 / 391-98 / NVH 391-98).